The primary structure comprises 183 residues: MAVQANQSASFGFRTASPSQKLSSKPIAHISLSTKLKPSSRPSLSCSTWNQGQIPARHSCINPGIFAYPPSNLTFSHELPESESPPLGKKKMRVLVKPLEKPKVVLKFVWMQKDIGVALDHMIPGFGTIPLSPYYFWPRKDAWEELKTLLESKPWISELHRVFLLNQATDIINLWQSSGGDLS.

The protein belongs to the chloroplast-specific ribosomal protein cS23 family. As to quaternary structure, part of the 30S ribosomal subunit.

Its subcellular location is the plastid. It localises to the chloroplast. In terms of biological role, component of the chloroplast ribosome (chloro-ribosome), a dedicated translation machinery responsible for the synthesis of chloroplast genome-encoded proteins, including proteins of the transcription and translation machinery and components of the photosynthetic apparatus. In Arabidopsis thaliana (Mouse-ear cress), this protein is Small ribosomal subunit protein cS23y.